The sequence spans 629 residues: Chaperone protein HtpG (629 aa).

Residues 1-336 (MSSTENNGTA…TEDLSLNVSR (336 aa)) are a; substrate-binding. The interval 337-549 (EMVQSSPVMA…KDAIDSQLER (213 aa)) is b. Positions 550–629 (MMKMMNTPMP…ELIEAATLTR (80 aa)) are c.

This sequence belongs to the heat shock protein 90 family. In terms of assembly, homodimer.

It localises to the cytoplasm. In terms of biological role, molecular chaperone. Has ATPase activity. This chain is Chaperone protein HtpG, found in Chlorobium chlorochromatii (strain CaD3).